Here is a 374-residue protein sequence, read N- to C-terminus: Peptide chain release factor 2 (374 aa).

An N5-methylglutamine modification is found at Gln-250.

The protein belongs to the prokaryotic/mitochondrial release factor family. In terms of processing, methylated by PrmC. Methylation increases the termination efficiency of RF2.

The protein resides in the cytoplasm. Its function is as follows. Peptide chain release factor 2 directs the termination of translation in response to the peptide chain termination codons UGA and UAA. The protein is Peptide chain release factor 2 of Beutenbergia cavernae (strain ATCC BAA-8 / DSM 12333 / CCUG 43141 / JCM 11478 / NBRC 16432 / NCIMB 13614 / HKI 0122).